Reading from the N-terminus, the 465-residue chain is Neuromedin-K receptor (465 aa).

At 1 to 84 (MATLPAAETW…TNQFVQPSWR (84 aa)) the chain is on the extracellular side. N-linked (GlcNAc...) asparagine glycosylation is found at Asn23, Asn50, and Asn73. Residues 85–107 (IALWSLAYGVVVAVAVLGNLIVI) form a helical membrane-spanning segment. At 108-117 (WIILAHKRMR) the chain is on the cytoplasmic side. Residues 118-139 (TVTNYFLVNLAFSDASMAAFNT) traverse the membrane as a helical segment. Topologically, residues 140–159 (LVNFIYALHSEWYFGANYCR) are extracellular. An intrachain disulfide couples Cys158 to Cys233. The helical transmembrane segment at 160-181 (FQNFFPITAVFASIYSMTAIAV) threads the bilayer. The Cytoplasmic segment spans residues 182–201 (DRYMAIIDPLKPRLSATATK). A helical membrane pass occupies residues 202 to 222 (IVIGSIWILAFLLAFPQCLYS). Residues 223–245 (KTKVMPGRTLCFVQWPEGPKQHF) lie on the Extracellular side of the membrane. A helical transmembrane segment spans residues 246-270 (TYHIIVIILVYCFPLLIMGITYTIV). The Cytoplasmic portion of the chain corresponds to 271 to 299 (GITLWGGEIPGDTCDKYHEQLKAKRKVVK). Residues 300 to 321 (MMIIVVMTFAICWLPYHIYFIL) form a helical membrane-spanning segment. Residues 322–334 (TAIYQQLNRWKYI) lie on the Extracellular side of the membrane. Residues 335–359 (QQVYLASFWLAMSSTMYNPIIYCCL) form a helical membrane-spanning segment. The Cytoplasmic portion of the chain corresponds to 360–465 (NKRFRAGFKR…SPYTSVDEYS (106 aa)). Cys374 is lipidated: S-palmitoyl cysteine. Positions 415–465 (PNDADTTRSSRKKRATPRDPSFNGCSRRNSKSASATSSFISSPYTSVDEYS) are disordered. Residues 445–465 (KSASATSSFISSPYTSVDEYS) show a composition bias toward low complexity.

This sequence belongs to the G-protein coupled receptor 1 family. In terms of processing, the anchoring of this receptor to the plasma membrane is probably mediated by the palmitoylation of a cysteine residue.

The protein resides in the cell membrane. This is a receptor for the tachykinin neuropeptide neuromedin-K (neurokinin B). It is associated with G proteins that activate a phosphatidylinositol-calcium second messenger system. The rank order of affinity of this receptor to tachykinins is: neuromedin-K &gt; substance K &gt; substance P. In Homo sapiens (Human), this protein is Neuromedin-K receptor (TACR3).